We begin with the raw amino-acid sequence, 90 residues long: Probable Fe(2+)-trafficking protein (90 aa).

The protein belongs to the Fe(2+)-trafficking protein family.

In terms of biological role, could be a mediator in iron transactions between iron acquisition and iron-requiring processes, such as synthesis and/or repair of Fe-S clusters in biosynthetic enzymes. In Laribacter hongkongensis (strain HLHK9), this protein is Probable Fe(2+)-trafficking protein.